A 179-amino-acid polypeptide reads, in one-letter code: MVKVANKYAKALFDVSLDTNNLETINEELTVINEAVKDKIEQLKMVDSNPTQTAEQRRELINGVFTDINPYIKNMMYVLADNRHISLIADVFKAFQSLYNGHYNQDFATIESTYELSQEELDKIVKLVTQQTKLSKVIVDTKINPDLIGGFRVKVGTTVLDGSVRNDLVQLQRKFRRVN.

Belongs to the ATPase delta chain family. In terms of assembly, F-type ATPases have 2 components, F(1) - the catalytic core - and F(0) - the membrane proton channel. F(1) has five subunits: alpha(3), beta(3), gamma(1), delta(1), epsilon(1). F(0) has three main subunits: a(1), b(2) and c(10-14). The alpha and beta chains form an alternating ring which encloses part of the gamma chain. F(1) is attached to F(0) by a central stalk formed by the gamma and epsilon chains, while a peripheral stalk is formed by the delta and b chains.

The protein localises to the cell membrane. F(1)F(0) ATP synthase produces ATP from ADP in the presence of a proton or sodium gradient. F-type ATPases consist of two structural domains, F(1) containing the extramembraneous catalytic core and F(0) containing the membrane proton channel, linked together by a central stalk and a peripheral stalk. During catalysis, ATP synthesis in the catalytic domain of F(1) is coupled via a rotary mechanism of the central stalk subunits to proton translocation. Its function is as follows. This protein is part of the stalk that links CF(0) to CF(1). It either transmits conformational changes from CF(0) to CF(1) or is implicated in proton conduction. The polypeptide is ATP synthase subunit delta (Staphylococcus aureus (strain Mu50 / ATCC 700699)).